A 250-amino-acid chain; its full sequence is Flagellar L-ring protein (250 aa).

The N-terminal stretch at 1 to 32 (MTRINTNTQKNNNTKFSKLILGVMVSSIVLSG) is a signal peptide. Residue cysteine 33 is the site of N-palmitoyl cysteine attachment. Cysteine 33 carries the S-diacylglycerol cysteine lipid modification.

It belongs to the FlgH family. In terms of assembly, the basal body constitutes a major portion of the flagellar organelle and consists of four rings (L,P,S, and M) mounted on a central rod.

The protein localises to the cell outer membrane. It localises to the bacterial flagellum basal body. Assembles around the rod to form the L-ring and probably protects the motor/basal body from shearing forces during rotation. The protein is Flagellar L-ring protein of Hydrogenovibrio crunogenus (strain DSM 25203 / XCL-2) (Thiomicrospira crunogena).